Consider the following 25-residue polypeptide: Caerin-1.10 (25 aa).

Leu25 carries the post-translational modification Leucine amide.

Belongs to the frog skin active peptide (FSAP) family. Caerin subfamily. As to expression, expressed by the skin dorsal glands.

The protein resides in the secreted. In terms of biological role, antibacterial peptide with wide spectrum of activity. This chain is Caerin-1.10, found in Litoria rothii (Roth's tree frog).